The primary structure comprises 57 residues: UPF0391 membrane protein RPD_2934 (57 aa).

The next 2 membrane-spanning stretches (helical) occupy residues 6–26 and 35–55; these read WALIFLVISVVAGIFGFTGVS and ILFYIFAAIFIVLLILGFTIF.

The protein belongs to the UPF0391 family.

The protein localises to the cell membrane. This Rhodopseudomonas palustris (strain BisB5) protein is UPF0391 membrane protein RPD_2934.